We begin with the raw amino-acid sequence, 555 residues long: Glucose-6-phosphate isomerase (555 aa).

D-glucose 6-phosphate contacts are provided by residues G169–S170, S219–T224, Q364, E368, H399, and K521. The active-site Proton donor is the E368. Residues H399 and K521 contribute to the active site.

It belongs to the GPI family. In terms of assembly, homodimer.

It localises to the cytoplasm. Its subcellular location is the cytosol. The catalysed reaction is alpha-D-glucose 6-phosphate = beta-D-fructose 6-phosphate. The protein operates within carbohydrate degradation; glycolysis; D-glyceraldehyde 3-phosphate and glycerone phosphate from D-glucose: step 2/4. In terms of biological role, in the cytoplasm, catalyzes the conversion of glucose-6-phosphate to fructose-6-phosphate, the second step in glycolysis, and the reverse reaction during gluconeogenesis. The polypeptide is Glucose-6-phosphate isomerase (PGI1) (Candida glabrata (strain ATCC 2001 / BCRC 20586 / JCM 3761 / NBRC 0622 / NRRL Y-65 / CBS 138) (Yeast)).